The primary structure comprises 669 residues: DNA ligase (669 aa).

NAD(+)-binding positions include 34–38 (DAEYD), 83–84 (SL), and glutamate 113. Catalysis depends on lysine 115, which acts as the N6-AMP-lysine intermediate. Residues arginine 136, glutamate 170, lysine 286, and lysine 310 each contribute to the NAD(+) site. Zn(2+) is bound by residues cysteine 404, cysteine 407, cysteine 422, and cysteine 427. Residues 591 to 669 (IADSPFAGKT…EEALVKAISH (79 aa)) enclose the BRCT domain.

It belongs to the NAD-dependent DNA ligase family. LigA subfamily. Mg(2+) is required as a cofactor. It depends on Mn(2+) as a cofactor.

It catalyses the reaction NAD(+) + (deoxyribonucleotide)n-3'-hydroxyl + 5'-phospho-(deoxyribonucleotide)m = (deoxyribonucleotide)n+m + AMP + beta-nicotinamide D-nucleotide.. DNA ligase that catalyzes the formation of phosphodiester linkages between 5'-phosphoryl and 3'-hydroxyl groups in double-stranded DNA using NAD as a coenzyme and as the energy source for the reaction. It is essential for DNA replication and repair of damaged DNA. The chain is DNA ligase from Halalkalibacterium halodurans (strain ATCC BAA-125 / DSM 18197 / FERM 7344 / JCM 9153 / C-125) (Bacillus halodurans).